The following is a 206-amino-acid chain: Large ribosomal subunit protein uL3 (206 aa).

Residues Val-122–Arg-154 form a disordered region.

The protein belongs to the universal ribosomal protein uL3 family. Part of the 50S ribosomal subunit. Forms a cluster with proteins L14 and L19.

One of the primary rRNA binding proteins, it binds directly near the 3'-end of the 23S rRNA, where it nucleates assembly of the 50S subunit. This chain is Large ribosomal subunit protein uL3, found in Leptospira borgpetersenii serovar Hardjo-bovis (strain JB197).